The chain runs to 176 residues: HTH-type transcriptional regulator DctR (176 aa).

An HTH luxR-type domain is found at 109-174 (VPEANVSLSR…ELVRHQHIDY (66 aa)). The segment at residues 133-152 (TEDILEKLKISLKTFYCHKH) is a DNA-binding region (H-T-H motif).

Functionally, may act as a transcriptional regulator of dctA. Could be involved in the regulation of the genes coding for the type III secretion system in enterohaemorragic strains. The chain is HTH-type transcriptional regulator DctR (dctR) from Escherichia coli O157:H7.